The primary structure comprises 241 residues: Biosynthetic peptidoglycan transglycosylase (241 aa).

The chain crosses the membrane as a helical span at residues 19-39; sequence AILAVLGVWIAGILLFSVMPV.

It belongs to the glycosyltransferase 51 family.

Its subcellular location is the cell inner membrane. It carries out the reaction [GlcNAc-(1-&gt;4)-Mur2Ac(oyl-L-Ala-gamma-D-Glu-L-Lys-D-Ala-D-Ala)](n)-di-trans,octa-cis-undecaprenyl diphosphate + beta-D-GlcNAc-(1-&gt;4)-Mur2Ac(oyl-L-Ala-gamma-D-Glu-L-Lys-D-Ala-D-Ala)-di-trans,octa-cis-undecaprenyl diphosphate = [GlcNAc-(1-&gt;4)-Mur2Ac(oyl-L-Ala-gamma-D-Glu-L-Lys-D-Ala-D-Ala)](n+1)-di-trans,octa-cis-undecaprenyl diphosphate + di-trans,octa-cis-undecaprenyl diphosphate + H(+). Its pathway is cell wall biogenesis; peptidoglycan biosynthesis. Peptidoglycan polymerase that catalyzes glycan chain elongation from lipid-linked precursors. The sequence is that of Biosynthetic peptidoglycan transglycosylase from Cronobacter sakazakii (strain ATCC BAA-894) (Enterobacter sakazakii).